The following is a 247-amino-acid chain: Aspartate/glutamate leucyltransferase (247 aa).

The protein belongs to the R-transferase family. Bpt subfamily.

The protein resides in the cytoplasm. It carries out the reaction N-terminal L-glutamyl-[protein] + L-leucyl-tRNA(Leu) = N-terminal L-leucyl-L-glutamyl-[protein] + tRNA(Leu) + H(+). It catalyses the reaction N-terminal L-aspartyl-[protein] + L-leucyl-tRNA(Leu) = N-terminal L-leucyl-L-aspartyl-[protein] + tRNA(Leu) + H(+). Its function is as follows. Functions in the N-end rule pathway of protein degradation where it conjugates Leu from its aminoacyl-tRNA to the N-termini of proteins containing an N-terminal aspartate or glutamate. The sequence is that of Aspartate/glutamate leucyltransferase from Dechloromonas aromatica (strain RCB).